Consider the following 351-residue polypeptide: Very-long-chain 3-oxoacyl-CoA reductase (351 aa).

A helical transmembrane segment spans residues 26-46 (LLWCAFTVGAVKLTTFMLSLI). NADP(+)-binding residues include Leu-72, Asp-126, Asn-153, Tyr-225, Lys-229, Val-258, and Ser-260. Catalysis depends on Tyr-225, which acts as the Proton donor. The active-site Lowers pKa of active site Tyr is the Lys-229.

Belongs to the short-chain dehydrogenases/reductases (SDR) family.

The protein resides in the endoplasmic reticulum membrane. The catalysed reaction is a very-long-chain (3R)-3-hydroxyacyl-CoA + NADP(+) = a very-long-chain 3-oxoacyl-CoA + NADPH + H(+). It functions in the pathway lipid metabolism; fatty acid biosynthesis. Component of the microsomal membrane bound fatty acid elongation system, which produces the 26-carbon very long-chain fatty acids (VLCFA) from palmitate. Catalyzes the reduction of the 3-ketoacyl-CoA intermediate that is formed in each cycle of fatty acid elongation. VLCFAs serve as precursors for ceramide and sphingolipids. This Eremothecium gossypii (strain ATCC 10895 / CBS 109.51 / FGSC 9923 / NRRL Y-1056) (Yeast) protein is Very-long-chain 3-oxoacyl-CoA reductase.